Reading from the N-terminus, the 689-residue chain is Protein CFAP20DC (689 aa).

Disordered regions lie at residues glycine 143–lysine 179, leucine 217–arginine 236, leucine 241–asparagine 262, serine 333–leucine 424, and serine 583–glutamate 660. Residues arginine 150–threonine 176 are compositionally biased toward polar residues. Residues glutamate 343–proline 359 show a composition bias toward polar residues. Acidic residues predominate over residues serine 394–glutamate 405. A compositionally biased stretch (polar residues) spans isoleucine 411–proline 421. Residues serine 583–threonine 593 show a composition bias toward low complexity.

The protein is Protein CFAP20DC (CFAP20DC) of Macaca fascicularis (Crab-eating macaque).